The following is a 293-amino-acid chain: Nitrogenase iron protein (293 aa).

An ATP-binding site is contributed by 10 to 17; sequence GKGGIGKS. Cys-98 contacts [4Fe-4S] cluster. At Arg-101 the chain carries ADP-ribosylarginine; by dinitrogenase reductase ADP-ribosyltransferase. Cys-133 provides a ligand contact to [4Fe-4S] cluster.

Belongs to the NifH/BchL/ChlL family. In terms of assembly, homodimer. Requires [4Fe-4S] cluster as cofactor. The reversible ADP-ribosylation of Arg-101 inactivates the nitrogenase reductase and regulates nitrogenase activity.

It carries out the reaction N2 + 8 reduced [2Fe-2S]-[ferredoxin] + 16 ATP + 16 H2O = H2 + 8 oxidized [2Fe-2S]-[ferredoxin] + 2 NH4(+) + 16 ADP + 16 phosphate + 6 H(+). Functionally, the key enzymatic reactions in nitrogen fixation are catalyzed by the nitrogenase complex, which has 2 components: the iron protein and the molybdenum-iron protein. The chain is Nitrogenase iron protein from Klebsiella pneumoniae (strain 342).